We begin with the raw amino-acid sequence, 115 residues long: Large ribosomal subunit protein bL19 (115 aa).

Belongs to the bacterial ribosomal protein bL19 family.

Its function is as follows. This protein is located at the 30S-50S ribosomal subunit interface and may play a role in the structure and function of the aminoacyl-tRNA binding site. This chain is Large ribosomal subunit protein bL19, found in Bacillus pumilus (strain SAFR-032).